Consider the following 341-residue polypeptide: S-adenosylmethionine:tRNA ribosyltransferase-isomerase (341 aa).

It belongs to the QueA family. In terms of assembly, monomer.

The protein resides in the cytoplasm. The enzyme catalyses 7-aminomethyl-7-carbaguanosine(34) in tRNA + S-adenosyl-L-methionine = epoxyqueuosine(34) in tRNA + adenine + L-methionine + 2 H(+). It functions in the pathway tRNA modification; tRNA-queuosine biosynthesis. Transfers and isomerizes the ribose moiety from AdoMet to the 7-aminomethyl group of 7-deazaguanine (preQ1-tRNA) to give epoxyqueuosine (oQ-tRNA). The sequence is that of S-adenosylmethionine:tRNA ribosyltransferase-isomerase from Staphylococcus epidermidis (strain ATCC 12228 / FDA PCI 1200).